A 639-amino-acid chain; its full sequence is 1-deoxy-D-xylulose-5-phosphate synthase (639 aa).

Thiamine diphosphate-binding positions include His-79 and 120–122 (GHS). Asp-151 contributes to the Mg(2+) binding site. Residues 152 to 153 (GG), Asn-180, Tyr-288, and Glu-370 each bind thiamine diphosphate. Asn-180 contacts Mg(2+).

It belongs to the transketolase family. DXPS subfamily. As to quaternary structure, homodimer. Mg(2+) serves as cofactor. The cofactor is thiamine diphosphate.

It catalyses the reaction D-glyceraldehyde 3-phosphate + pyruvate + H(+) = 1-deoxy-D-xylulose 5-phosphate + CO2. It functions in the pathway metabolic intermediate biosynthesis; 1-deoxy-D-xylulose 5-phosphate biosynthesis; 1-deoxy-D-xylulose 5-phosphate from D-glyceraldehyde 3-phosphate and pyruvate: step 1/1. In terms of biological role, catalyzes the acyloin condensation reaction between C atoms 2 and 3 of pyruvate and glyceraldehyde 3-phosphate to yield 1-deoxy-D-xylulose-5-phosphate (DXP). The polypeptide is 1-deoxy-D-xylulose-5-phosphate synthase (Methylococcus capsulatus (strain ATCC 33009 / NCIMB 11132 / Bath)).